The chain runs to 300 residues: Cation-efflux pump FieF (300 aa).

Helical transmembrane passes span 12–32 (AAIA…FAWW), 39–59 (ILAA…NLLV), 82–102 (AALA…LTGI), and 114–134 (PGVG…LVSF). Positions 45 and 49 each coordinate Zn(2+). Zn(2+) contacts are provided by H153 and D157. The next 2 membrane-spanning stretches (helical) occupy residues 156–176 (SDVM…YGWH) and 178–198 (ADAL…LRMG).

Belongs to the cation diffusion facilitator (CDF) transporter (TC 2.A.4) family. FieF subfamily. As to quaternary structure, homodimer.

Its subcellular location is the cell inner membrane. The catalysed reaction is Zn(2+)(in) + H(+)(out) = Zn(2+)(out) + H(+)(in). It carries out the reaction Cd(2+)(in) + H(+)(out) = Cd(2+)(out) + H(+)(in). It catalyses the reaction Fe(2+)(in) + H(+)(out) = Fe(2+)(out) + H(+)(in). Divalent metal cation transporter which exports Zn(2+), Cd(2+) and possibly Fe(2+). May be involved in zinc and iron detoxification by efflux. The sequence is that of Cation-efflux pump FieF from Escherichia coli O157:H7 (strain EC4115 / EHEC).